A 315-amino-acid polypeptide reads, in one-letter code: Lipoyl synthase (315 aa).

Positions 62, 67, 73, 88, 92, 95, and 302 each coordinate [4Fe-4S] cluster. In terms of domain architecture, Radical SAM core spans 74-292 (FNHGTATFMI…KIALKLGFIR (219 aa)).

Belongs to the radical SAM superfamily. Lipoyl synthase family. [4Fe-4S] cluster serves as cofactor.

It is found in the cytoplasm. The enzyme catalyses [[Fe-S] cluster scaffold protein carrying a second [4Fe-4S](2+) cluster] + N(6)-octanoyl-L-lysyl-[protein] + 2 oxidized [2Fe-2S]-[ferredoxin] + 2 S-adenosyl-L-methionine + 4 H(+) = [[Fe-S] cluster scaffold protein] + N(6)-[(R)-dihydrolipoyl]-L-lysyl-[protein] + 4 Fe(3+) + 2 hydrogen sulfide + 2 5'-deoxyadenosine + 2 L-methionine + 2 reduced [2Fe-2S]-[ferredoxin]. It participates in protein modification; protein lipoylation via endogenous pathway; protein N(6)-(lipoyl)lysine from octanoyl-[acyl-carrier-protein]: step 2/2. Its function is as follows. Catalyzes the radical-mediated insertion of two sulfur atoms into the C-6 and C-8 positions of the octanoyl moiety bound to the lipoyl domains of lipoate-dependent enzymes, thereby converting the octanoylated domains into lipoylated derivatives. The polypeptide is Lipoyl synthase (Vesicomyosocius okutanii subsp. Calyptogena okutanii (strain HA)).